A 191-amino-acid chain; its full sequence is Thymidylate kinase (191 aa).

Residue 7-14 (GVDGAGKS) participates in ATP binding.

This sequence belongs to the thymidylate kinase family.

The catalysed reaction is dTMP + ATP = dTDP + ADP. Functionally, phosphorylation of dTMP to form dTDP in both de novo and salvage pathways of dTTP synthesis. The protein is Thymidylate kinase of Helicobacter pylori (strain P12).